Here is a 593-residue protein sequence, read N- to C-terminus: Copine-5 (593 aa).

The C2 1 domain occupies 2 to 134 (EQPEDMASLS…SSGSRLEKPL (133 aa)). S19 is modified (phosphoserine). The Ca(2+) site is built by D38, D44, D98, D100, S103, K108, and D110. At S103 the chain carries Phosphoserine. S140 is subject to Phosphoserine. The 124-residue stretch at 161–284 (KCGTIILSAE…ARGQSQFNIY (124 aa)) folds into the C2 2 domain. 5 residues coordinate Ca(2+): D192, D198, D254, D256, and D262. Positions 328–554 (NFTVAIDFTA…DVLAEIPDQL (227 aa)) constitute a VWFA domain. Residues 562 to 593 (GIRPRPPPAAPAQSPPQSPAHSPPGSPVHTHI) are disordered. Over residues 565–587 (PRPPPAAPAQSPPQSPAHSPPGS) the composition is skewed to pro residues.

Belongs to the copine family. Requires Ca(2+) as cofactor. Expressed in the cerebra and cerebellum of newborn brain. Expressed in the eye, lung and muscles but weakly expressed in the adult brain (at protein level).

The protein resides in the perikaryon. It localises to the cell projection. Functionally, probable calcium-dependent phospholipid-binding protein that may play a role in calcium-mediated intracellular processes. Plays a role in dendrite formation by melanocytes. This chain is Copine-5, found in Mus musculus (Mouse).